Reading from the N-terminus, the 456-residue chain is Tyrosine phenol-lyase (456 aa).

At K257 the chain carries N6-(pyridoxal phosphate)lysine.

It belongs to the beta-eliminating lyase family. In terms of assembly, homotetramer. It depends on pyridoxal 5'-phosphate as a cofactor.

It carries out the reaction L-tyrosine + H2O = phenol + pyruvate + NH4(+). The protein is Tyrosine phenol-lyase (tpl) of Citrobacter intermedius (Escherichia intermedia).